The primary structure comprises 348 residues: N-formyl peptide receptor 2 (348 aa).

The N-linked (GlcNAc...) asparagine glycan is linked to Asn1. Residues 1-24 (NFSTPLNEHEEVSYESAGYTVLRI) lie on the Extracellular side of the membrane. Residues 25-47 (LPLVVLGVTFVLGVLGNGLVIWV) form a helical membrane-spanning segment. Over 48–58 (AGFRMTRTVTT) the chain is Cytoplasmic. A helical membrane pass occupies residues 59–80 (ICYLNLALADFSFTATLPFLIV). Over 81 to 97 (SMAMGEKWPFGWFLCKL) the chain is Extracellular. A disulfide bridge links Cys95 with Cys173. The chain crosses the membrane as a helical span at residues 98-118 (IHIVVDINLFGSVFLIGFIAL). The Cytoplasmic segment spans residues 119–137 (DRCICVLHPVWAQNHRTVS). Residues 138-159 (LAMKVIVGPWILALVLTLPVFL) traverse the membrane as a helical segment. At 160–202 (FLTTVTIPNGDTYCTFNFASWGGTPEERQKVAITMLTARGIIR) the chain is on the extracellular side. The chain crosses the membrane as a helical span at residues 203-223 (FVIGFSLPMSIVAICYGLIAA). Residues 224-239 (KIHKKGMIKSSRPLRV) are Cytoplasmic-facing. Residues 240–263 (LTAVVASFFICWFPFQLVALLGTV) form a helical membrane-spanning segment. The Extracellular segment spans residues 264–283 (WLKEMLFYGKYKIIDILVNP). Residues 284–303 (TSSLAFFNSCLNPMLYVFVG) form a helical membrane-spanning segment. Residues 304 to 348 (QDFRERLIHSLPTSLERALSEDSAPTNDTAASCASPPAETELQAM) are Cytoplasmic-facing. The interval 323–348 (SEDSAPTNDTAASCASPPAETELQAM) is disordered. Over residues 326–335 (SAPTNDTAAS) the composition is skewed to polar residues.

It belongs to the G-protein coupled receptor 1 family. Interacts with APP; the interaction takes place at the cell surface and the complex is then rapidly internalized.

The protein localises to the cell membrane. Functionally, low affinity receptor for N-formyl-methionyl peptides, which are powerful neutrophil chemotactic factors. Binding of FMLP to the receptor causes activation of neutrophils. This response is mediated via a G-protein that activates a phosphatidylinositol-calcium second messenger system. Receptor for the chemokine-like protein FAM19A5, mediating FAM19A5-stimulated macrophage chemotaxis and the inhibitory effect on TNFSF11/RANKL-induced osteoclast differentiation. This Gorilla gorilla gorilla (Western lowland gorilla) protein is N-formyl peptide receptor 2 (FPR2).